The primary structure comprises 72 residues: UPF0352 protein SO_2176 (72 aa).

Belongs to the UPF0352 family.

This is UPF0352 protein SO_2176 from Shewanella oneidensis (strain ATCC 700550 / JCM 31522 / CIP 106686 / LMG 19005 / NCIMB 14063 / MR-1).